The primary structure comprises 179 residues: Large ribosomal subunit protein uL6 (179 aa).

This sequence belongs to the universal ribosomal protein uL6 family. Part of the 50S ribosomal subunit.

Functionally, this protein binds to the 23S rRNA, and is important in its secondary structure. It is located near the subunit interface in the base of the L7/L12 stalk, and near the tRNA binding site of the peptidyltransferase center. In Alkaliphilus metalliredigens (strain QYMF), this protein is Large ribosomal subunit protein uL6.